The following is a 119-amino-acid chain: Ubiquinone biosynthesis accessory factor UbiK (119 aa).

Residues 79 to 99 (LLRTREKLALLEQRLSELEAR) are a coiled coil. Over residues 96 to 106 (LEARDKPEEVK) the composition is skewed to basic and acidic residues. The segment at 96-119 (LEARDKPEEVKPAPAIPPVDPQQE) is disordered. Residues 109–119 (PAIPPVDPQQE) are compositionally biased toward pro residues.

The protein belongs to the UbiK family. In terms of assembly, homotrimer.

It is found in the cytoplasm. The protein operates within cofactor biosynthesis; ubiquinone biosynthesis. Required for efficient ubiquinone (coenzyme Q) biosynthesis under aerobic conditions. UbiK is probably an accessory factor of Ubi enzymes and facilitates ubiquinone biosynthesis by acting as an assembly factor, a targeting factor, or both. Dispensable for ubiquinone biosynthesis under anaerobiosis. Required for proliferation in macrophages and virulence in mice. Significantly contributes to colonization and invasion as well as host inflammation and innate immunity after infection. In vitro, has membrane fusogenic activity at acidic pH. The chain is Ubiquinone biosynthesis accessory factor UbiK from Salmonella typhimurium (strain LT2 / SGSC1412 / ATCC 700720).